A 600-amino-acid chain; its full sequence is Arginine--tRNA ligase (600 aa).

L-arginine is bound by residues 151–153 (SPN), H162, Y332, D336, and Q360. The 'HIGH' region signature appears at 152-162 (PNIAKEMHIGH).

This sequence belongs to the class-I aminoacyl-tRNA synthetase family.

It catalyses the reaction tRNA(Arg) + L-arginine + ATP = L-arginyl-tRNA(Arg) + AMP + diphosphate. The chain is Arginine--tRNA ligase (RARS) from Acanthamoeba polyphaga mimivirus (APMV).